The sequence spans 316 residues: Melanocyte-stimulating hormone receptor (316 aa).

The Extracellular portion of the chain corresponds to M1–E37. N29 carries an N-linked (GlcNAc...) asparagine glycan. Residues V38–I63 traverse the membrane as a helical segment. Residues A64–P72 lie on the Cytoplasmic side of the membrane. The chain crosses the membrane as a helical span at residues M73 to L93. The Extracellular segment spans residues E94 to N118. The chain crosses the membrane as a helical span at residues T119–V140. Over D141 to R163 the chain is Cytoplasmic. Residues V164–Y183 form a helical membrane-spanning segment. At E184–C191 the chain is on the extracellular side. Residues L192–L210 form a helical membrane-spanning segment. Residues A211–A239 lie on the Cytoplasmic side of the membrane. Residues A240–F265 form a helical membrane-spanning segment. The Extracellular portion of the chain corresponds to C266–N278. The chain crosses the membrane as a helical span at residues F279–F299. The Cytoplasmic segment spans residues R300–W316. C314 is lipidated: S-palmitoyl cysteine.

Belongs to the G-protein coupled receptor 1 family. As to quaternary structure, interacts with MGRN1, but does not undergo MGRN1-mediated ubiquitination; this interaction competes with GNAS-binding and thus inhibits agonist-induced cAMP production. Interacts with OPN3; the interaction results in a decrease in MC1R-mediated cAMP signaling and ultimately a decrease in melanin production in melanocytes.

It localises to the cell membrane. Functionally, receptor for MSH (alpha, beta and gamma) and ACTH. The activity of this receptor is mediated by G proteins which activate adenylate cyclase. Mediates melanogenesis, the production of eumelanin (black/brown) and phaeomelanin (red/yellow), via regulation of cAMP signaling in melanocytes. The sequence is that of Melanocyte-stimulating hormone receptor (MC1R) from Cebus albifrons (White-fronted capuchin).